A 114-amino-acid polypeptide reads, in one-letter code: Large ribosomal subunit protein bL20c (114 aa).

This sequence belongs to the bacterial ribosomal protein bL20 family.

The protein resides in the plastid. Its subcellular location is the chloroplast. Its function is as follows. Binds directly to 23S ribosomal RNA and is necessary for the in vitro assembly process of the 50S ribosomal subunit. It is not involved in the protein synthesizing functions of that subunit. In Tetradesmus obliquus (Green alga), this protein is Large ribosomal subunit protein bL20c.